The chain runs to 225 residues: MMSILKNDWAPLLQEEFQKPYYVKLRQFLKEEYRTKTIYPDMHDIFNALHYTPYANVKVVILGQDPYHGPNQAHGLSFSVKPGVALPPSLLNIFKELQDDLGCYIPNNGYLLKWAKQGVLLLNTVLTVRRGEANSHKGKGWEYFTDRVIELVNEKREPVVFILWGRHAQAKKALITNEHHYIIEAPHPSPFSAARGFFGSRPFSKTNAFLQQTGREPIDWQIENI.

The active-site Proton acceptor is Asp-65.

The protein belongs to the uracil-DNA glycosylase (UDG) superfamily. UNG family.

It is found in the cytoplasm. It catalyses the reaction Hydrolyzes single-stranded DNA or mismatched double-stranded DNA and polynucleotides, releasing free uracil.. Its function is as follows. Excises uracil residues from the DNA which can arise as a result of misincorporation of dUMP residues by DNA polymerase or due to deamination of cytosine. The polypeptide is Uracil-DNA glycosylase (Anoxybacillus flavithermus (strain DSM 21510 / WK1)).